Reading from the N-terminus, the 396-residue chain is Dimethyladenosine transferase 2, mitochondrial (396 aa).

The N-terminal 43 residues, 1–43, are a transit peptide targeting the mitochondrion; the sequence is MRGPAMRLPPRIALSALARGPSCILGSGAATRKDWQTRNRRGF. The tract at residues 43-71 is disordered; it reads FSDFNIEPLPDSDLEESSPWTSRNRSEPT. S-adenosyl-L-methionine contacts are provided by isoleucine 74, glutamate 123, and aspartate 149. The tract at residues 328-329 is DNA-binding; the sequence is KR.

This sequence belongs to the class I-like SAM-binding methyltransferase superfamily. rRNA adenine N(6)-methyltransferase family. KsgA subfamily. Homodimer. Component of the mitochondrial transcription initiation complex, composed at least of TFB2M, TFAM and POLRMT. In this complex TFAM recruits POLRMT to the promoter whereas TFB2M induces structural changes in POLRMT to enable promoter opening and trapping of the DNA non-template strand. Interacts with mitochondrial RNA polymerase POLRMT. Interacts with TFAM. In terms of tissue distribution, ubiquitously expressed.

The protein localises to the mitochondrion. It carries out the reaction adenosine in rRNA + S-adenosyl-L-methionine = N(6)-methyladenosine in rRNA + S-adenosyl-L-homocysteine + H(+). In terms of biological role, S-adenosyl-L-methionine-dependent rRNA methyltransferase which may methylate two specific adjacent adenosines in the loop of a conserved hairpin near the 3'-end of 12S mitochondrial rRNA. Component of the mitochondrial transcription initiation complex, composed at least of TFB2M, TFAM and POLRMT that is required for basal transcription of mitochondrial DNA. In this complex, TFAM recruits POLRMT to a specific promoter whereas TFB2M induces structural changes in POLRMT to enable promoter opening and trapping of the DNA non-template strand. Stimulates transcription independently of the methyltransferase activity. The polypeptide is Dimethyladenosine transferase 2, mitochondrial (Mus musculus (Mouse)).